Reading from the N-terminus, the 241-residue chain is Pyridoxine 5'-phosphate synthase (241 aa).

Position 7 (Asn-7) interacts with 3-amino-2-oxopropyl phosphate. 1-deoxy-D-xylulose 5-phosphate is bound at residue 9 to 10 (DH). Residue Arg-18 participates in 3-amino-2-oxopropyl phosphate binding. His-43 (proton acceptor) is an active-site residue. Residues Arg-45 and His-50 each contribute to the 1-deoxy-D-xylulose 5-phosphate site. Catalysis depends on Glu-70, which acts as the Proton acceptor. Thr-100 contributes to the 1-deoxy-D-xylulose 5-phosphate binding site. His-191 acts as the Proton donor in catalysis. Residues Gly-192 and 213–214 (GH) contribute to the 3-amino-2-oxopropyl phosphate site.

Belongs to the PNP synthase family. Homooctamer; tetramer of dimers.

It localises to the cytoplasm. The catalysed reaction is 3-amino-2-oxopropyl phosphate + 1-deoxy-D-xylulose 5-phosphate = pyridoxine 5'-phosphate + phosphate + 2 H2O + H(+). It participates in cofactor biosynthesis; pyridoxine 5'-phosphate biosynthesis; pyridoxine 5'-phosphate from D-erythrose 4-phosphate: step 5/5. In terms of biological role, catalyzes the complicated ring closure reaction between the two acyclic compounds 1-deoxy-D-xylulose-5-phosphate (DXP) and 3-amino-2-oxopropyl phosphate (1-amino-acetone-3-phosphate or AAP) to form pyridoxine 5'-phosphate (PNP) and inorganic phosphate. This chain is Pyridoxine 5'-phosphate synthase, found in Maridesulfovibrio salexigens (strain ATCC 14822 / DSM 2638 / NCIMB 8403 / VKM B-1763) (Desulfovibrio salexigens).